The primary structure comprises 66 residues: Large ribosomal subunit protein bL35c (66 aa).

It belongs to the bacterial ribosomal protein bL35 family.

The protein localises to the plastid. Its subcellular location is the chloroplast. This is Large ribosomal subunit protein bL35c from Guillardia theta (Cryptophyte).